Here is a 493-residue protein sequence, read N- to C-terminus: Guanosine-5'-triphosphate,3'-diphosphate pyrophosphatase (493 aa).

The protein belongs to the GppA/Ppx family. GppA subfamily.

The enzyme catalyses guanosine 3'-diphosphate 5'-triphosphate + H2O = guanosine 3',5'-bis(diphosphate) + phosphate + H(+). It participates in purine metabolism; ppGpp biosynthesis; ppGpp from GTP: step 2/2. Its function is as follows. Catalyzes the conversion of pppGpp to ppGpp. Guanosine pentaphosphate (pppGpp) is a cytoplasmic signaling molecule which together with ppGpp controls the 'stringent response', an adaptive process that allows bacteria to respond to amino acid starvation, resulting in the coordinated regulation of numerous cellular activities. The polypeptide is Guanosine-5'-triphosphate,3'-diphosphate pyrophosphatase (Salmonella gallinarum (strain 287/91 / NCTC 13346)).